A 471-amino-acid polypeptide reads, in one-letter code: Ribulose bisphosphate carboxylase large chain (471 aa).

At Lys-5 the chain carries N6,N6,N6-trimethyllysine. Substrate-binding residues include Asn-114 and Thr-164. Residue Lys-166 is the Proton acceptor of the active site. Lys-168 is a substrate binding site. The Mg(2+) site is built by Lys-192, Asp-194, and Glu-195. Lys-192 bears the N6-carboxylysine mark. His-285 (proton acceptor) is an active-site residue. Substrate-binding residues include Arg-286, His-318, and Ser-370.

Belongs to the RuBisCO large chain family. Type I subfamily. Heterohexadecamer of 8 large chains and 8 small chains; disulfide-linked. The disulfide link is formed within the large subunit homodimers. Mg(2+) is required as a cofactor. The disulfide bond which can form in the large chain dimeric partners within the hexadecamer appears to be associated with oxidative stress and protein turnover.

It localises to the plastid. Its subcellular location is the chloroplast. It catalyses the reaction 2 (2R)-3-phosphoglycerate + 2 H(+) = D-ribulose 1,5-bisphosphate + CO2 + H2O. The enzyme catalyses D-ribulose 1,5-bisphosphate + O2 = 2-phosphoglycolate + (2R)-3-phosphoglycerate + 2 H(+). In terms of biological role, ruBisCO catalyzes two reactions: the carboxylation of D-ribulose 1,5-bisphosphate, the primary event in carbon dioxide fixation, as well as the oxidative fragmentation of the pentose substrate in the photorespiration process. Both reactions occur simultaneously and in competition at the same active site. This is Ribulose bisphosphate carboxylase large chain from Anthocleista grandiflora (Forest fever tree).